We begin with the raw amino-acid sequence, 968 residues long: RNA polymerase-associated protein RapA (968 aa).

Residues 164–334 (DVGRRHAPRV…FARLRLLDPN (171 aa)) form the Helicase ATP-binding domain. 177–184 (DEVGLGKT) serves as a coordination point for ATP. The DEAH box motif lies at 280-283 (DEAH). One can recognise a Helicase C-terminal domain in the interval 490–644 (RVEWLMGYLT…TCPTGRAIYD (155 aa)).

Belongs to the SNF2/RAD54 helicase family. RapA subfamily. As to quaternary structure, interacts with the RNAP. Has a higher affinity for the core RNAP than for the holoenzyme. Its ATPase activity is stimulated by binding to RNAP.

Functionally, transcription regulator that activates transcription by stimulating RNA polymerase (RNAP) recycling in case of stress conditions such as supercoiled DNA or high salt concentrations. Probably acts by releasing the RNAP, when it is trapped or immobilized on tightly supercoiled DNA. Does not activate transcription on linear DNA. Probably not involved in DNA repair. The polypeptide is RNA polymerase-associated protein RapA (Salmonella arizonae (strain ATCC BAA-731 / CDC346-86 / RSK2980)).